The following is a 284-amino-acid chain: MSRPDQAARRRAIAAELHVSPTFDARDEAERRIGFVADYLRTAGLRACVLGISGGIDSSTAGRLAQLAVERLRASGYDARFVAMRLPYGAQHDEADARRALAFVRADETLTVDVKPAADAMLAALAAGGLAYLDHAQQDFVLGNIKARERMIAQYAVAGARNGVVIGTDHAAESVMGFFTKFGDGGADVLPLAGLTKRRVRALARMLGADEPLVLKTPTADLETLRPQRPDEHAYGITYEQIDDFLEGKPMDDAVAETVLRFYDATRHKRALPYTMFDWPGHPA.

51-58 is an ATP binding site; sequence GISGGIDS. Aspartate 57 is a binding site for Mg(2+). Arginine 148 contacts deamido-NAD(+). Threonine 168 is a binding site for ATP. Glutamate 173 is a binding site for Mg(2+). The deamido-NAD(+) site is built by lysine 181 and aspartate 188. Residues lysine 197 and threonine 219 each contribute to the ATP site. 268-269 contacts deamido-NAD(+); sequence HK.

Belongs to the NAD synthetase family. As to quaternary structure, homodimer.

It carries out the reaction deamido-NAD(+) + NH4(+) + ATP = AMP + diphosphate + NAD(+) + H(+). It participates in cofactor biosynthesis; NAD(+) biosynthesis; NAD(+) from deamido-NAD(+) (ammonia route): step 1/1. Its function is as follows. Catalyzes the ATP-dependent amidation of deamido-NAD to form NAD. Uses ammonia as a nitrogen source. In Burkholderia pseudomallei (strain 1106a), this protein is NH(3)-dependent NAD(+) synthetase.